The following is a 125-amino-acid chain: Ly6/PLAUR domain-containing protein 2 (125 aa).

Positions 1–22 (MRGTRLALLALVLAACGELAPA) are cleaved as a signal peptide. The UPAR/Ly6 domain occupies 25 to 100 (CYVCPEPTGV…VSCCNTELCN (76 aa)). N-linked (GlcNAc...) asparagine glycosylation occurs at N46. The GPI-anchor amidated glycine moiety is linked to residue G103. Positions 104 to 125 (APALNSLHCGALTLLPLLSLRL) are cleaved as a propeptide — removed in mature form.

The protein localises to the cell membrane. The chain is Ly6/PLAUR domain-containing protein 2 (LYPD2) from Homo sapiens (Human).